Here is a 608-residue protein sequence, read N- to C-terminus: Chaperone protein HtpG (608 aa).

The tract at residues 1–332 (MQFQTEVNQL…VEDLPLNVSR (332 aa)) is a; substrate-binding. Residues 333–536 (EILQENQILK…KNKPDFAMQQ (204 aa)) form a b region. A c region spans residues 537 to 608 (LLKQMGQEQN…LTKIINKAFS (72 aa)).

This sequence belongs to the heat shock protein 90 family. Homodimer.

The protein resides in the cytoplasm. Its function is as follows. Molecular chaperone. Has ATPase activity. The protein is Chaperone protein HtpG of Campylobacter jejuni subsp. jejuni serotype O:23/36 (strain 81-176).